The sequence spans 1030 residues: Isoleucine--tRNA ligase 2 (1030 aa).

Residues 48–58 (PFATGLPHYGH) carry the 'HIGH' region motif. A 'KMSKS' region motif is present at residues 589-593 (KMSKR). Position 592 (Lys592) interacts with ATP.

Belongs to the class-I aminoacyl-tRNA synthetase family. IleS type 2 subfamily. Monomer. The cofactor is Zn(2+).

The protein localises to the cytoplasm. It carries out the reaction tRNA(Ile) + L-isoleucine + ATP = L-isoleucyl-tRNA(Ile) + AMP + diphosphate. In terms of biological role, catalyzes the attachment of isoleucine to tRNA(Ile). As IleRS can inadvertently accommodate and process structurally similar amino acids such as valine, to avoid such errors it has two additional distinct tRNA(Ile)-dependent editing activities. One activity is designated as 'pretransfer' editing and involves the hydrolysis of activated Val-AMP. The other activity is designated 'posttransfer' editing and involves deacylation of mischarged Val-tRNA(Ile). Its function is as follows. Confers high-level resistance to the antibiotic mupirocin (pseudomonic acid A), an Ile-analog produced by P.fluorescens NCIMB 10586 itself that competitively inhibits activation by Ile-tRNA synthetase, thus inhibiting protein biosynthesis. In Pseudomonas fluorescens, this protein is Isoleucine--tRNA ligase 2 (ileS2).